The chain runs to 281 residues: Sulfur carrier protein FdhD (281 aa).

Catalysis depends on cysteine 117, which acts as the Cysteine persulfide intermediate.

The protein belongs to the FdhD family.

It is found in the cytoplasm. Required for formate dehydrogenase (FDH) activity. Acts as a sulfur carrier protein that transfers sulfur from IscS to the molybdenum cofactor prior to its insertion into FDH. The protein is Sulfur carrier protein FdhD of Xanthomonas axonopodis pv. citri (strain 306).